We begin with the raw amino-acid sequence, 254 residues long: 5-oxoprolinase subunit A (254 aa).

Belongs to the LamB/PxpA family. In terms of assembly, forms a complex composed of PxpA, PxpB and PxpC.

It carries out the reaction 5-oxo-L-proline + ATP + 2 H2O = L-glutamate + ADP + phosphate + H(+). In terms of biological role, catalyzes the cleavage of 5-oxoproline to form L-glutamate coupled to the hydrolysis of ATP to ADP and inorganic phosphate. The sequence is that of 5-oxoprolinase subunit A from Rhodopseudomonas palustris (strain BisB5).